The chain runs to 313 residues: Formimidoylglutamase (313 aa).

6 residues coordinate Mn(2+): His-130, Asp-155, His-157, Asp-159, Asp-241, and Asp-243.

This sequence belongs to the arginase family. Requires Mn(2+) as cofactor.

It carries out the reaction N-formimidoyl-L-glutamate + H2O = formamide + L-glutamate. The protein operates within amino-acid degradation; L-histidine degradation into L-glutamate; L-glutamate from N-formimidoyl-L-glutamate (hydrolase route): step 1/1. Functionally, catalyzes the conversion of N-formimidoyl-L-glutamate to L-glutamate and formamide. The polypeptide is Formimidoylglutamase (Salmonella paratyphi B (strain ATCC BAA-1250 / SPB7)).